Reading from the N-terminus, the 61-residue chain is Small ribosomal subunit protein uS14 (61 aa).

4 residues coordinate Zn(2+): Cys24, Cys27, Cys40, and Cys43.

It belongs to the universal ribosomal protein uS14 family. Zinc-binding uS14 subfamily. In terms of assembly, part of the 30S ribosomal subunit. Contacts proteins S3 and S10. Zn(2+) is required as a cofactor.

Its function is as follows. Binds 16S rRNA, required for the assembly of 30S particles and may also be responsible for determining the conformation of the 16S rRNA at the A site. The sequence is that of Small ribosomal subunit protein uS14 from Campylobacter curvus (strain 525.92).